The sequence spans 250 residues: Maleate isomerase (250 aa).

Substrate is bound by residues Asn-15, 80–82 (CLV), Tyr-137, and Asn-167. Residue Cys-80 is the Nucleophile of the active site. Cys-80 is modified (S-(2-succinyl)cysteine). Catalysis depends on Cys-198, which acts as the Proton donor. Residue 199–200 (VQ) participates in substrate binding.

It belongs to the maleate isomerase family. As to quaternary structure, homodimer.

The catalysed reaction is maleate = fumarate. It participates in cofactor degradation; nicotinate degradation. Functionally, catalyzes cis-trans isomerization of the C2-C3 double bond in maleate to yield fumarate in the aerobic nicotinate degradation pathway. In Pseudomonas putida (strain ATCC 47054 / DSM 6125 / CFBP 8728 / NCIMB 11950 / KT2440), this protein is Maleate isomerase.